A 267-amino-acid polypeptide reads, in one-letter code: Thymidylate synthase (267 aa).

Arginine 24 lines the dUMP pocket. Position 54 (histidine 54) interacts with (6R)-5,10-methylene-5,6,7,8-tetrahydrofolate. 129–130 lines the dUMP pocket; the sequence is RR. Cysteine 149 acts as the Nucleophile in catalysis. DUMP-binding positions include 169 to 172, asparagine 180, and 210 to 212; these read RSAD and HVY. Aspartate 172 is a (6R)-5,10-methylene-5,6,7,8-tetrahydrofolate binding site. Residue alanine 266 coordinates (6R)-5,10-methylene-5,6,7,8-tetrahydrofolate.

This sequence belongs to the thymidylate synthase family. Bacterial-type ThyA subfamily. As to quaternary structure, homodimer.

The protein localises to the cytoplasm. The enzyme catalyses dUMP + (6R)-5,10-methylene-5,6,7,8-tetrahydrofolate = 7,8-dihydrofolate + dTMP. It participates in pyrimidine metabolism; dTTP biosynthesis. Functionally, catalyzes the reductive methylation of 2'-deoxyuridine-5'-monophosphate (dUMP) to 2'-deoxythymidine-5'-monophosphate (dTMP) while utilizing 5,10-methylenetetrahydrofolate (mTHF) as the methyl donor and reductant in the reaction, yielding dihydrofolate (DHF) as a by-product. This enzymatic reaction provides an intracellular de novo source of dTMP, an essential precursor for DNA biosynthesis. This chain is Thymidylate synthase, found in Paenarthrobacter aurescens (strain TC1).